Here is a 338-residue protein sequence, read N- to C-terminus: Glycerol-3-phosphate dehydrogenase [NAD(P)+] (338 aa).

Residues Ser14, Tyr15, His35, and Lys109 each coordinate NADPH. Sn-glycerol 3-phosphate-binding residues include Lys109, Gly138, and Thr140. NADPH is bound at residue Ala142. 5 residues coordinate sn-glycerol 3-phosphate: Lys194, Asp247, Ser257, Arg258, and Asn259. Residue Lys194 is the Proton acceptor of the active site. Arg258 lines the NADPH pocket. Positions 282 and 284 each coordinate NADPH.

This sequence belongs to the NAD-dependent glycerol-3-phosphate dehydrogenase family.

The protein resides in the cytoplasm. It catalyses the reaction sn-glycerol 3-phosphate + NAD(+) = dihydroxyacetone phosphate + NADH + H(+). The enzyme catalyses sn-glycerol 3-phosphate + NADP(+) = dihydroxyacetone phosphate + NADPH + H(+). Its pathway is membrane lipid metabolism; glycerophospholipid metabolism. Functionally, catalyzes the reduction of the glycolytic intermediate dihydroxyacetone phosphate (DHAP) to sn-glycerol 3-phosphate (G3P), the key precursor for phospholipid synthesis. This chain is Glycerol-3-phosphate dehydrogenase [NAD(P)+], found in Shewanella putrefaciens (strain CN-32 / ATCC BAA-453).